The primary structure comprises 835 residues: uncharacterized protein (835 aa).

Disordered stretches follow at residues M1–R38, D317–R477, S489–R668, D721–F750, and Q810–F835. Low complexity-rich tracts occupy residues S7–S37, N328–T351, and S361–S395. 2 stretches are compositionally biased toward polar residues: residues I396–I406 and I415–T424. Residues G432–M442 are compositionally biased toward gly residues. Positions P449–R477 are enriched in polar residues. Low complexity predominate over residues S489–P510. Residues I511–P521 are compositionally biased toward pro residues. The span at T522–S629 shows a compositional bias: low complexity. The segment covering I631 to Q640 has biased composition (polar residues). Low complexity-rich tracts occupy residues T641–S664 and N724–F750. Positions I826–F835 are enriched in acidic residues.

This is an uncharacterized protein from Dictyostelium discoideum (Social amoeba).